A 481-amino-acid chain; its full sequence is MEKKLVPQSISKERLQKLEAQATLTPQQEEAKARKIEREKARLKELNIPTESKESKDCSPAGMINPYALTEVILERPLDWSNPRTTDIVERVLGSSMQDLSKGDSVLRAGRDQNAEVKIVDSVLTKTQRGQDGLERILESFNDYDMPPEEKEEAAPKAKKAAQKLDIDDLREQALSSTTITKEISKIILPTKNLRDDNNTVHQYREVGFQSNGAHNLWDTVVQGIAGDCYMLAALSAIAWVWPALLNMDVDIMSNQDEWRLYRYFIGRSKQTYARPSGSGTSTNEILQEGYYKVPIFARSRYWFNGEYWPALFEQAYANWKFPNDSKYNAILQIGGGWPEEALCELSGDSWFTSSGKLMLSSFTDLSLLNFMKSMCYSWKTIKPMVIVTPCWEPLPPMMPGIAAYHAYTVLGYTVSNGAYYLIIRNPWGVTEPTGDGVLSKRDWVIHFDNMKWFNLSKDDGIFALRLDKVRENFWYIAYMY.

Residues 169–481 form the Calpain catalytic domain; it reads DLREQALSST…ENFWYIAYMY (313 aa). Residues C229, H406, and N426 contribute to the active site.

It belongs to the peptidase C2 family.

Its activity is regulated as follows. Inactive below 20 degrees Celsius and pH 6.0. Inhibited by divalent cations. Functionally, thiol protease. Probably an important virulence factor. This is Thiol protease (tpr) from Porphyromonas gingivalis (strain ATCC BAA-308 / W83).